The chain runs to 87 residues: Large ribosomal subunit protein bL31B (87 aa).

It belongs to the bacterial ribosomal protein bL31 family. Type B subfamily. In terms of assembly, part of the 50S ribosomal subunit.

The polypeptide is Large ribosomal subunit protein bL31B (Halorhodospira halophila (strain DSM 244 / SL1) (Ectothiorhodospira halophila (strain DSM 244 / SL1))).